The following is a 366-amino-acid chain: Ribosomal RNA small subunit methyltransferase H 1 (366 aa).

Residues 1-46 (MADQNINKNEKVLTGQPTENQEPVHKRRERYKGTHPKTFKEKYKER) are disordered. The span at 25–37 (HKRRERYKGTHPK) shows a compositional bias: basic residues. Residues 97–99 (GGH), aspartate 117, phenylalanine 147, aspartate 166, and glutamine 173 contribute to the S-adenosyl-L-methionine site.

The protein belongs to the methyltransferase superfamily. RsmH family.

The protein localises to the cytoplasm. It carries out the reaction cytidine(1402) in 16S rRNA + S-adenosyl-L-methionine = N(4)-methylcytidine(1402) in 16S rRNA + S-adenosyl-L-homocysteine + H(+). Functionally, specifically methylates the N4 position of cytidine in position 1402 (C1402) of 16S rRNA. This is Ribosomal RNA small subunit methyltransferase H 1 from Lachnoclostridium phytofermentans (strain ATCC 700394 / DSM 18823 / ISDg) (Clostridium phytofermentans).